The following is a 520-amino-acid chain: Cytochrome P450 734A1 (520 aa).

The helical transmembrane segment at 13–33 threads the bilayer; that stretch reads VLVLSVILSLVIVKGMSLLWW. C463 is a binding site for heme.

The protein belongs to the cytochrome P450 family. Heme is required as a cofactor.

Its subcellular location is the membrane. In terms of biological role, cytochrome P450 involved in brassinosteroids (BRs) inactivation and regulation of BRs homeostasis. Inactivates the BRs castasterone (CS) and brassinolide (BL) through carbon 26 hydroxylation. Acts in association with CYP72C1 to inactivate BRs and modulate photomorphogenesis. The protein is Cytochrome P450 734A1 (CYP734A1) of Arabidopsis thaliana (Mouse-ear cress).